The chain runs to 214 residues: MVAQFNKFIILGPPGAGKGTVCKLLSKTTKLVHIASGDLFREAIKNQSVIGRKIAAIISQGGYVDDATTNQLVYEYITTNPLPNGFILDGYPRTENQLDFLNIKLTIDMVFELVVSDLNKLITRIDNRVICNNCNSVYNLLFQKPLVENSCDQCSAKLVKRSDDNKAVVKARMELYQQTIQPIHTYFFNKQLLVQIDCFLPLEEQLKTIKQFIR.

Residue 15-20 (GAGKGT) participates in ATP binding. Residues 35 to 64 (ASGDLFREAIKNQSVIGRKIAAIISQGGYV) are NMP. Residues serine 36, arginine 41, 62 to 64 (GYV), 90 to 93 (GYPR), and glutamine 97 each bind AMP. Residues 127-164 (NRVICNNCNSVYNLLFQKPLVENSCDQCSAKLVKRSDD) are LID. An ATP-binding site is contributed by arginine 128. Zn(2+) contacts are provided by cysteine 131 and cysteine 134. ATP is bound at residue 137–138 (VY). The Zn(2+) site is built by cysteine 151 and cysteine 154. AMP-binding residues include arginine 161 and arginine 172. Residue leucine 200 coordinates ATP.

It belongs to the adenylate kinase family. As to quaternary structure, monomer.

The protein resides in the cytoplasm. The enzyme catalyses AMP + ATP = 2 ADP. It functions in the pathway purine metabolism; AMP biosynthesis via salvage pathway; AMP from ADP: step 1/1. Its function is as follows. Catalyzes the reversible transfer of the terminal phosphate group between ATP and AMP. Plays an important role in cellular energy homeostasis and in adenine nucleotide metabolism. The chain is Adenylate kinase from Mycoplasma genitalium (strain ATCC 33530 / DSM 19775 / NCTC 10195 / G37) (Mycoplasmoides genitalium).